The sequence spans 404 residues: Probable thioredoxin reductase ARB_06224 (404 aa).

An N-terminal signal peptide occupies residues 1-22 (MGVQRLALALIAFTSALTSVIA). Residue 67–75 (DEGIYRNGA) participates in FAD binding. Cys-172 and Cys-175 are joined by a disulfide. Asn-213 is a glycosylation site (N-linked (GlcNAc...) asparagine). Position 334 to 343 (334 to 343 (DANNDGSTNG)) interacts with FAD.

This sequence belongs to the class-II pyridine nucleotide-disulfide oxidoreductase family. In terms of assembly, homodimer. FAD is required as a cofactor.

The protein localises to the secreted. It catalyses the reaction [thioredoxin]-dithiol + NADP(+) = [thioredoxin]-disulfide + NADPH + H(+). The chain is Probable thioredoxin reductase ARB_06224 from Arthroderma benhamiae (strain ATCC MYA-4681 / CBS 112371) (Trichophyton mentagrophytes).